A 144-amino-acid chain; its full sequence is Large ribosomal subunit protein uL15 (144 aa).

Positions 1–58 are disordered; that stretch reads MRLNTLAPAAGSKHAPKRVGRGIGSGLGKTGGRGHKGQKSRSGGKVRPGFEGGQMPLK. Gly residues predominate over residues 21-31; the sequence is RGIGSGLGKTG. Positions 32–44 are enriched in basic residues; that stretch reads GRGHKGQKSRSGG.

This sequence belongs to the universal ribosomal protein uL15 family. Part of the 50S ribosomal subunit.

Its function is as follows. Binds to the 23S rRNA. This chain is Large ribosomal subunit protein uL15, found in Vibrio parahaemolyticus serotype O3:K6 (strain RIMD 2210633).